The sequence spans 119 residues: NADH-quinone oxidoreductase subunit A (119 aa).

Helical transmembrane passes span Phe7–Gly27, Leu63–Val83, and Ile88–Val108.

Belongs to the complex I subunit 3 family. In terms of assembly, NDH-1 is composed of 14 different subunits. Subunits NuoA, H, J, K, L, M, N constitute the membrane sector of the complex.

The protein resides in the cell inner membrane. It catalyses the reaction a quinone + NADH + 5 H(+)(in) = a quinol + NAD(+) + 4 H(+)(out). NDH-1 shuttles electrons from NADH, via FMN and iron-sulfur (Fe-S) centers, to quinones in the respiratory chain. The immediate electron acceptor for the enzyme in this species is believed to be ubiquinone. Couples the redox reaction to proton translocation (for every two electrons transferred, four hydrogen ions are translocated across the cytoplasmic membrane), and thus conserves the redox energy in a proton gradient. This is NADH-quinone oxidoreductase subunit A from Ralstonia pickettii (strain 12J).